Reading from the N-terminus, the 551-residue chain is Podocalyxin (551 aa).

The signal sequence occupies residues 1 to 21; the sequence is MRSALALAALLLLLLSPPSLS. The segment at 18-324 is disordered; sequence PSLSQEKSPQ…QRVSCGPPER (307 aa). The Extracellular segment spans residues 22 to 452; sequence QEKSPQPGPT…PPEETEDRFS (431 aa). Residues 32–59 show a composition bias toward low complexity; sequence PMATSTSTRPAPASAPAPKSSVAASVPA. The span at 60–90 shows a compositional bias: polar residues; it reads EQNTTPMTTKAPATQSPSASPGSSVENSAPA. A compositionally biased stretch (low complexity) spans 91-104; it reads QGSTTTQQSLSVTT. Residues 142–164 are compositionally biased toward polar residues; that stretch reads APSNHSITTKPLATEATSQAPRQ. 2 N-linked (GlcNAc...) asparagine glycosylation sites follow: Asn145 and Asn180. A compositionally biased stretch (polar residues) spans 234–244; that stretch reads PVASSAETQGM. Over residues 289-300 the composition is skewed to low complexity; it reads TSSSTELASTAL. Asn333 carries N-linked (GlcNAc...) asparagine glycosylation. A helical membrane pass occupies residues 453 to 473; the sequence is LPLIITIVCMASFLLLVAALY. Topologically, residues 474-551 are cytoplasmic; sequence GCCHQRLSHR…DLDEEEDTHL (78 aa). Thr511 carries the phosphothreonine modification. Ser530 carries the post-translational modification Phosphoserine. Thr549 bears the Phosphothreonine mark.

This sequence belongs to the podocalyxin family. Monomer; when associated with the membrane raft. Oligomer; when integrated in the apical membrane. Found in a complex with EZR, PODXL and NHERF2. Associates with the actin cytoskeleton through complex formation with EZR and NHERF2. Interacts (via the C-terminal PDZ-binding motif DTHL) with NHERF1 (via the PDZ domains); interaction is not detected in glomerular epithelium cells, take place early in the secretory pathway and is necessary for its apical membrane sorting. Interacts (via the C-terminal PDZ-binding motif DTHL) with NHERF2 (via the PDZ 1 domain); interaction is detected in glomerular epithelium cells. Interacts with EZR. Post-translationally, N- and O-linked glycosylated. Sialoglycoprotein. Glomerular epithelium cell (podocyte) and endothelial cells.

It localises to the apical cell membrane. The protein resides in the cell projection. Its subcellular location is the microvillus. It is found in the membrane raft. The protein localises to the lamellipodium. It localises to the filopodium. The protein resides in the ruffle. Its subcellular location is the membrane. Functionally, involved in the regulation of both adhesion and cell morphology and cancer progression. Functions as an anti-adhesive molecule that maintains an open filtration pathway between neighboring foot processes in the podocyte by charge repulsion. Acts as a pro-adhesive molecule, enhancing the adherence of cells to immobilized ligands, increasing the rate of migration and cell-cell contacts in an integrin-dependent manner. Induces the formation of apical actin-dependent microvilli. Involved in the formation of a preapical plasma membrane subdomain to set up initial epithelial polarization and the apical lumen formation during renal tubulogenesis. Plays a role in cancer development and aggressiveness by inducing cell migration and invasion through its interaction with the actin-binding protein EZR. Affects EZR-dependent signaling events, leading to increased activities of the MAPK and PI3K pathways in cancer cells. The protein is Podocalyxin (PODXL) of Oryctolagus cuniculus (Rabbit).